The following is a 273-amino-acid chain: uncharacterized protein (273 aa).

It belongs to the PhyH family.

This is an uncharacterized protein from Mycobacterium tuberculosis (strain ATCC 25618 / H37Rv).